Consider the following 95-residue polypeptide: Co-chaperonin GroES (95 aa).

Belongs to the GroES chaperonin family. As to quaternary structure, heptamer of 7 subunits arranged in a ring. Interacts with the chaperonin GroEL.

It is found in the cytoplasm. Functionally, together with the chaperonin GroEL, plays an essential role in assisting protein folding. The GroEL-GroES system forms a nano-cage that allows encapsulation of the non-native substrate proteins and provides a physical environment optimized to promote and accelerate protein folding. GroES binds to the apical surface of the GroEL ring, thereby capping the opening of the GroEL channel. The polypeptide is Co-chaperonin GroES (Pelodictyon phaeoclathratiforme (strain DSM 5477 / BU-1)).